The sequence spans 632 residues: X-ray repair cross-complementing protein 5 (632 aa).

The Schiff-base intermediate with DNA; for 5'-deoxyribose-5-phosphate lyase activity role is filled by Arg52. A Ku domain is found at 283-490 (LYLNKDLSFS…VDKMKGIIQK (208 aa)). The interval 555–578 (DYSPEGKAAKRKQAGDAQAEKRPK) is disordered. One can recognise an SAP domain in the interval 595 to 629 (LGKLTVSALKDTCRHYGLRSGGKKQELIDALTEYF).

Belongs to the ku70 family. In terms of assembly, heterodimer composed of XRCC5/Ku80 and XRCC6/Ku70. Component of the core long-range non-homologous end joining (NHEJ) complex (also named DNA-PK complex) composed of PRKDC, LIG4, XRCC4, XRCC6/Ku70, XRCC5/Ku86 and NHEJ1/XLF. Additional component of the NHEJ complex includes PAXX. Following autophosphorylation, PRKDC dissociates from DNA, leading to formation of the short-range NHEJ complex, composed of LIG4, XRCC4, XRCC6/Ku70, XRCC5/Ku86 and NHEJ1/XLF. Post-translationally, phosphorylated on serine residues.

It is found in the nucleus. The protein resides in the chromosome. In terms of biological role, single-stranded DNA-dependent ATP-dependent helicase that plays a key role in DNA non-homologous end joining (NHEJ) by recruiting DNA-PK to DNA. Required for double-strand break repair and V(D)J recombination. Also has a role in chromosome translocation. Has a role in chromosome translocation. The DNA helicase II complex binds preferentially to fork-like ends of double-stranded DNA in a cell cycle-dependent manner. It works in the 3'-5' direction. During NHEJ, the XRCC5-XRRC6 dimer performs the recognition step: it recognizes and binds to the broken ends of the DNA and protects them from further resection. Binding to DNA may be mediated by XRCC6. The XRCC5-XRRC6 dimer acts as a regulatory subunit of the DNA-dependent protein kinase complex DNA-PK by increasing the affinity of the catalytic subunit PRKDC to DNA by 100-fold. The XRCC5-XRRC6 dimer is probably involved in stabilizing broken DNA ends and bringing them together. The assembly of the DNA-PK complex to DNA ends is required for the NHEJ ligation step. Probably also acts as a 5'-deoxyribose-5-phosphate lyase (5'-dRP lyase), by catalyzing the beta-elimination of the 5' deoxyribose-5-phosphate at an abasic site near double-strand breaks. 5'-dRP lyase activity allows to 'clean' the termini of abasic sites, a class of nucleotide damage commonly associated with strand breaks, before such broken ends can be joined. The XRCC5-XRRC6 dimer together with APEX1 acts as a negative regulator of transcription. The chain is X-ray repair cross-complementing protein 5 (XRCC6) from Gallus gallus (Chicken).